The sequence spans 409 residues: MKAEILCVGTELLLGDIVNTNAQYISKELANIGIEVYHHSVIGDNENRLLKELERAFNYCDLVITTGGLGPTKDDLTKESVAKFFQEDLVLHEKSLKQIEKRLLCFNKSMTESNRKQAYFPKNCEILENPNGTAPGFIIEKDNKIAIILPGPPYEMQPMFENKVIPYLEKLTNSTIKSKVLRITGIGESDVADLISDILERQTNPTVAPYAKQGETTLRITAKANSEEKAISLIVPIEKKIRQILGDNIYSSGETLLEEVVANILVKRNLTIATAESCTGGLLAGKLINFPGISSVFLEGAITYSNESKINRLNVKKETLEKYTAVSKEVALEMAEGIAKSAGTNIGISTTGVAGPGGGTYDKPIGLIYIGLYINGKTFVKELNYSGNRQFIRNITVTRALDFLRRNLK.

It belongs to the CinA family.

The chain is Putative competence-damage inducible protein from Clostridium botulinum (strain Kyoto / Type A2).